The following is an 82-amino-acid chain: ATP synthase subunit c (82 aa).

The next 2 helical transmembrane spans lie at 6 to 26 (LGLTCLAAAIGMAIAAAGCGI) and 49 to 69 (IMVTLILGLAFVESLAIYALV).

This sequence belongs to the ATPase C chain family. F-type ATPases have 2 components, F(1) - the catalytic core - and F(0) - the membrane proton channel. F(1) has five subunits: alpha(3), beta(3), gamma(1), delta(1), epsilon(1). F(0) has three main subunits: a(1), b(2) and c(10-14). The alpha and beta chains form an alternating ring which encloses part of the gamma chain. F(1) is attached to F(0) by a central stalk formed by the gamma and epsilon chains, while a peripheral stalk is formed by the delta and b chains.

The protein resides in the cell inner membrane. Its function is as follows. F(1)F(0) ATP synthase produces ATP from ADP in the presence of a proton or sodium gradient. F-type ATPases consist of two structural domains, F(1) containing the extramembraneous catalytic core and F(0) containing the membrane proton channel, linked together by a central stalk and a peripheral stalk. During catalysis, ATP synthesis in the catalytic domain of F(1) is coupled via a rotary mechanism of the central stalk subunits to proton translocation. In terms of biological role, key component of the F(0) channel; it plays a direct role in translocation across the membrane. A homomeric c-ring of between 10-14 subunits forms the central stalk rotor element with the F(1) delta and epsilon subunits. The polypeptide is ATP synthase subunit c (Nitratidesulfovibrio vulgaris (strain ATCC 29579 / DSM 644 / CCUG 34227 / NCIMB 8303 / VKM B-1760 / Hildenborough) (Desulfovibrio vulgaris)).